We begin with the raw amino-acid sequence, 319 residues long: MSSYFVNSFSGRYPNGPDYQLLNYGASSGALNGGTYRDSSTATMHHATGSYGYTYNGMDLTVNNRRGGSGDDAVTSGHFGGGSLVGDALGFGSPTTERSFRQPSSCSLASAAESLLSPGSGDTSLGARSSSPRSEQSGSGNLSSTNLSSSTNISSSGGGGGGGTVQRFTELDDASTESEELRRDNGHGGNPVPRTGHSHGVQKQEGGPAGAAAGNTVGSEGQPPQIFPWMRKLHISHDMTGPDGKRARTAYTRYQTLELEKEFHFNRYLTRRRRIEIAHALCLTERQIKIWFQNRRMKWKKDNKLKSMSLATPGSAFQP.

The interval 114 to 224 is disordered; the sequence is SLLSPGSGDT…NTVGSEGQPP (111 aa). Low complexity predominate over residues 128-155; sequence RSSSPRSEQSGSGNLSSTNLSSSTNISS. Residues 226 to 231 carry the Antp-type hexapeptide motif; sequence IFPWMR. Positions 244–303 form a DNA-binding region, homeobox; that stretch reads GKRARTAYTRYQTLELEKEFHFNRYLTRRRRIEIAHALCLTERQIKIWFQNRRMKWKKDN.

The protein belongs to the Antp homeobox family.

It is found in the nucleus. Sequence-specific transcription factor which is part of a developmental regulatory system that provides cells with specific positional identities on the anterior-posterior axis. The sequence is that of Homeobox protein Hox-B5a (hoxb5a) from Takifugu rubripes (Japanese pufferfish).